The sequence spans 745 residues: Catalase-peroxidase (745 aa).

A cross-link (tryptophyl-tyrosyl-methioninium (Trp-Tyr) (with M-249)) is located at residues 97–223; sequence WHSAGTYRTG…LAAVQMGLIY (127 aa). His-98 functions as the Proton acceptor in the catalytic mechanism. Residues 223–249 constitute a cross-link (tryptophyl-tyrosyl-methioninium (Tyr-Met) (with W-97)); that stretch reads YVNPEGPDGSPDPWASARDIRMTFARM. Position 264 (His-264) interacts with heme b. Residues 345 to 368 form a disordered region; it reads KQWQPVNPKPEDLAPGAHSPDRRV.

This sequence belongs to the peroxidase family. Peroxidase/catalase subfamily. Homodimer or homotetramer. Requires heme b as cofactor. Post-translationally, formation of the three residue Trp-Tyr-Met cross-link is important for the catalase, but not the peroxidase activity of the enzyme.

The enzyme catalyses H2O2 + AH2 = A + 2 H2O. It catalyses the reaction 2 H2O2 = O2 + 2 H2O. Functionally, bifunctional enzyme with both catalase and broad-spectrum peroxidase activity. The sequence is that of Catalase-peroxidase from Phenylobacterium zucineum (strain HLK1).